The chain runs to 767 residues: MQSPAATAEGLSGPLFGAYTFPTFKFQPRHDSMDWRRISTLDVDRVARELDVATLQENIAGITFCNLDREVCSRCGQPVDPALLKVLRLAQLIIEYLLHCQDCLSASVAQLEARLQTSLGQQQRGQQELGRQADELKGVREESRRRRKMISTLQQLLMQTGTHSYHTCHLCDKTFMNATFLRGHIQRRHAGVAEGGKQKKQEQPVEEVLEELRAKLKWTQGELEAQREAERQRQLQEAELIHQREIEAKKEFDKWKEQEWTKLYGEIDKLKKLFWDEFKNVAKQNSTLEEKLRALQSHSVMESKLGSLRDEESEEWLRQARELQALREKTEIQKTEWKRKVKELHEEHMAEKKELQEENQRLQASLSQDQKKAAAQSQCQISTLRAQLQEQARIIASQEEMIQSLSLRKVEGIHKVPKAVDTEEDSPEEEMEDSQDEQHKVLAALRRNPTLLKHFRPILEDTLEEKLESMGIRKDAKGISIQTLRHLESLLRVQREQKARKFSEFLSLRGKLVKEVTSRAKERQENGAVVSQPDGQPSVKSQQSTLVTREAQPKTRTLQVALPSTPAEPPPPTRQSHGSHGSSLTQVSAPAPRPGLHGPSSTPPSSGPGMSTPPFSSEEDSEGDRVQRVSLQPPKVPSRMVPRPKDDWDWSDTETSEENAQPPGQGSGTLVQSMVKNLEKQLEAPAKKPAGGVSLFFMPNAGPQRAATPGRKPQLSEDESDLEISSLEDLPLDLDQREKPKPLSRSKLPEKFGTGPQSSGQPRVPAW.

The tract at residues Q122–R144 is disordered. Residues R131–R144 show a composition bias toward basic and acidic residues. Residues H166 to H189 form a C2H2-type zinc finger. Residues V205 to S406 adopt a coiled-coil conformation. S426 carries the phosphoserine modification. The interval S518 to W767 is disordered. Polar residues-rich tracts occupy residues P533–V547 and R574–S588. The span at G607–S616 shows a compositional bias: low complexity. Over residues E658 to V675 the composition is skewed to polar residues. Residues N677 to A686 show a composition bias toward basic and acidic residues.

It belongs to the DZIP C2H2-type zinc-finger protein family. In terms of assembly, interacts with SEPTIN2.

It localises to the cytoplasm. It is found in the cytoskeleton. The protein resides in the cilium basal body. The protein localises to the microtubule organizing center. Its subcellular location is the centrosome. It localises to the centriole. In terms of biological role, involved in primary cilium formation. Probably acts as a transition zone protein required for localization of PKD1/PC1 and PKD2/PC2 to the ciliary membrane. In Homo sapiens (Human), this protein is Cilium assembly protein DZIP1L.